We begin with the raw amino-acid sequence, 348 residues long: NADH-quinone oxidoreductase subunit H (348 aa).

The next 8 membrane-spanning stretches (helical) occupy residues 25-45 (ILFLVGQALVIFLVVVIVAAL), 95-115 (FMFILAPAVAMFTALASFAII), 128-148 (IGILFFFAMAGMAVYAVMFGG), 168-188 (ISYEVFLGLSLMGVVAMTGSF), 204-224 (WNIFPQFLGFLTFVVAGVAVT), 254-274 (FFIGEYVNVVLISALMTCLFF), 287-307 (ILPPAFWFMIKTLFFMTMFVL), and 327-347 (VCLPVTLINLMITAALILISA).

It belongs to the complex I subunit 1 family. NDH-1 is composed of 14 different subunits. Subunits NuoA, H, J, K, L, M, N constitute the membrane sector of the complex.

It localises to the cell inner membrane. It carries out the reaction a quinone + NADH + 5 H(+)(in) = a quinol + NAD(+) + 4 H(+)(out). In terms of biological role, NDH-1 shuttles electrons from NADH, via FMN and iron-sulfur (Fe-S) centers, to quinones in the respiratory chain. The immediate electron acceptor for the enzyme in this species is believed to be ubiquinone. Couples the redox reaction to proton translocation (for every two electrons transferred, four hydrogen ions are translocated across the cytoplasmic membrane), and thus conserves the redox energy in a proton gradient. This subunit may bind ubiquinone. The protein is NADH-quinone oxidoreductase subunit H of Psychrobacter sp. (strain PRwf-1).